The sequence spans 134 residues: Small ribosomal subunit protein uS9c (134 aa).

This sequence belongs to the universal ribosomal protein uS9 family.

It is found in the plastid. It localises to the chloroplast. This is Small ribosomal subunit protein uS9c (rps9) from Thalassiosira pseudonana (Marine diatom).